A 291-amino-acid chain; its full sequence is Pyridoxal 5'-phosphate synthase subunit PdxS (291 aa).

Asp-23 provides a ligand contact to D-ribose 5-phosphate. Lys-80 serves as the catalytic Schiff-base intermediate with D-ribose 5-phosphate. Gly-152 serves as a coordination point for D-ribose 5-phosphate. Arg-164 serves as a coordination point for D-glyceraldehyde 3-phosphate. D-ribose 5-phosphate is bound by residues Gly-213 and 234–235 (GS).

It belongs to the PdxS/SNZ family. As to quaternary structure, in the presence of PdxT, forms a dodecamer of heterodimers.

The catalysed reaction is aldehydo-D-ribose 5-phosphate + D-glyceraldehyde 3-phosphate + L-glutamine = pyridoxal 5'-phosphate + L-glutamate + phosphate + 3 H2O + H(+). The protein operates within cofactor biosynthesis; pyridoxal 5'-phosphate biosynthesis. Its function is as follows. Catalyzes the formation of pyridoxal 5'-phosphate from ribose 5-phosphate (RBP), glyceraldehyde 3-phosphate (G3P) and ammonia. The ammonia is provided by the PdxT subunit. Can also use ribulose 5-phosphate and dihydroxyacetone phosphate as substrates, resulting from enzyme-catalyzed isomerization of RBP and G3P, respectively. The sequence is that of Pyridoxal 5'-phosphate synthase subunit PdxS from Desulfitobacterium hafniense (strain DSM 10664 / DCB-2).